The sequence spans 608 residues: Cilia- and flagella-associated protein 100 (608 aa).

Residues 1 to 17 (MSETLSNIVSKNMTNDK) show a composition bias toward polar residues. The interval 1–57 (MSETLSNIVSKNMTNDKNSLESMNISSSSSAEENPKKQAKKXKERGPDPSANPFHLS) is disordered. Residues 20-32 (LESMNISSSSSAE) show a composition bias toward low complexity. Coiled-coil stretches lie at residues 164 to 196 (TLDC…LAKD) and 230 to 257 (LEIR…QHYK). 2 disordered regions span residues 291-320 (ASKD…AKEG) and 339-377 (LSSP…GEEP). Residues 339–361 (LSSPQQGSQPSESSGGNSRGSNS) are compositionally biased toward low complexity. 2 coiled-coil regions span residues 385 to 435 (QQLL…QLKQ) and 500 to 575 (TVQM…RGRT).

The protein belongs to the CFAP100 family.

Its subcellular location is the cytoplasm. It is found in the cytoskeleton. The protein resides in the cilium axoneme. May play a role in ciliary/flagellar motility by regulating the assembly and the activity of axonemal inner dynein arm. The chain is Cilia- and flagella-associated protein 100 from Macaca fascicularis (Crab-eating macaque).